The following is a 282-amino-acid chain: Ribonuclease P protein subunit p38 (282 aa).

2 disordered regions span residues 1 to 21 and 61 to 103; these read MAAA…PLPV and EDRK…QASG. N-acetylalanine is present on Ala-2. Ser-12 carries the post-translational modification Phosphoserine. The segment covering 88 to 97 has biased composition (basic and acidic residues); the sequence is EDLKKEKPKG. Phosphoserine occurs at positions 226 and 235. The disordered stretch occupies residues 262 to 282; it reads KLIPNPNKIRKPPKSKRTASK. Over residues 269-282 the composition is skewed to basic residues; that stretch reads KIRKPPKSKRTASK.

Belongs to the eukaryotic ribosomal protein eL8 family. As to quaternary structure, component of nuclear RNase P and RNase MRP ribonucleoproteins. RNase P consists of a catalytic RNA moiety and about 10 protein subunits; POP1, POP4, POP5, POP7, RPP14, RPP21, RPP25, RPP30, RPP38 and RPP40. Within the RNase P complex, POP1, POP7 and RPP25 form the 'finger' subcomplex, POP5, RPP14, RPP40 and homodimeric RPP30 form the 'palm' subcomplex, and RPP21, POP4 and RPP38 form the 'wrist' subcomplex. All subunits of the RNase P complex interact with the catalytic RNA. Several subunits of RNase P are also part of the RNase MRP complex. RNase MRP consists of a catalytic RNA moiety and about 8 protein subunits; POP1, POP7, RPP25, RPP30, RPP38, RPP40 and possibly also POP4 and POP5.

It is found in the nucleus. The protein resides in the nucleolus. Functionally, component of ribonuclease P, a ribonucleoprotein complex that generates mature tRNA molecules by cleaving their 5'-ends. Also a component of the MRP ribonuclease complex, which cleaves pre-rRNA sequences. This chain is Ribonuclease P protein subunit p38 (RPP38), found in Bos taurus (Bovine).